The chain runs to 1658 residues: Silent chromatin protein ESC1 (1658 aa).

Residues 36 to 54 (DSKMKDQHGYSRVHNDKYR) show a composition bias toward basic and acidic residues. Disordered regions lie at residues 36-76 (DSKM…SSHI) and 156-499 (TSFQ…LENE). Composition is skewed to acidic residues over residues 205–214 (LENDEYELSE) and 245–254 (SNDEYAEEEG). A compositionally biased stretch (polar residues) spans 262–286 (GQEQANVENATQISSSDSSEGQNYS). A compositionally biased stretch (acidic residues) spans 289–305 (VEMELEDDIDVESDAEK). Residues 335–352 (VIEKYESDEHKVHQRYSE) are compositionally biased toward basic and acidic residues. The segment covering 365–375 (VDDESEDEESQ) has biased composition (acidic residues). The segment covering 386 to 397 (VYHHNEHELDDK) has biased composition (basic and acidic residues). The segment covering 398–407 (ELIEDIESSD) has biased composition (acidic residues). A compositionally biased stretch (low complexity) spans 408-417 (SESQSAQESE). Composition is skewed to basic and acidic residues over residues 425-435 (EYKMKNEKSTS), 442-461 (SESRDQGFAKDAYTKNKVEQ), and 471-482 (DDIIRSSLDKNF). Phosphothreonine is present on Thr-500. Ser-532 carries the post-translational modification Phosphoserine. Disordered regions lie at residues 550–584 (SRNSNCPQKEEQVSESYLGHSNGSNLSGRSLDESE) and 589–608 (LKDFTGENNNNLKTDRGDLS). Residues 568 to 577 (GHSNGSNLSG) are compositionally biased toward polar residues. Ser-579, Ser-583, Ser-608, and Ser-662 each carry phosphoserine. Disordered regions lie at residues 770–819 (SKET…EDNT), 863–964 (EMSS…VKGT), and 1082–1115 (ENNTNMHDQVSQACSDSDRDQDSTAEKNVEGSAK). Residues 800–812 (QSKNFPGVANSTD) show a composition bias toward polar residues. Phosphoserine occurs at positions 865 and 866. Residues 869–878 (ECVKQNDDGS) show a composition bias toward basic and acidic residues. Residues 879-905 (KTQISFSTDSPDNFQESNDNTEFSSTK) are compositionally biased toward polar residues. A phosphoserine mark is found at Ser-888 and Ser-911. The span at 918 to 931 (SLKKELTKAEVVDK) shows a compositional bias: basic and acidic residues. Acidic residues predominate over residues 932 to 956 (LDEEESEDSYEQDYADPEPGNDEGS). Phosphoserine is present on residues Ser-937, Ser-1092, Ser-1096, Ser-1098, Ser-1166, Ser-1176, and Ser-1178. The span at 1082–1096 (ENNTNMHDQVSQACS) shows a compositional bias: polar residues. Over residues 1097 to 1115 (DSDRDQDSTAEKNVEGSAK) the composition is skewed to basic and acidic residues. Positions 1197-1207 (STDASVNMKSV) are enriched in polar residues. Positions 1197-1216 (STDASVNMKSVSSKERDSDE) are disordered. Phosphoserine occurs at positions 1214 and 1254. Over residues 1261–1272 (VKDKENLHKSEE) the composition is skewed to basic and acidic residues. The tract at residues 1261–1315 (VKDKENLHKSEEPLVEGLQSEQHFEKKDHSENEEEFDTIYGDITSANIHSNAPDD) is disordered. 3 positions are modified to phosphoserine: Ser-1290, Ser-1326, and Ser-1332. 2 disordered regions span residues 1334–1482 (RLIE…TSPE) and 1503–1658 (PATT…SVDK). The span at 1335 to 1366 (LIEDSRRGKNQEESDEVNTSRERDLTFEKSVN) shows a compositional bias: basic and acidic residues. Ser-1403, Ser-1409, Ser-1450, and Ser-1454 each carry phosphoserine. Acidic residues predominate over residues 1407 to 1423 (LNSEPEEAELYELEIEG). Polar residues predominate over residues 1463-1479 (YPYSNSENITAEKSAPT). Residues 1507–1537 (LEKHDKTNVTSVLDDRSEHLSSHDVDNEPHD) are compositionally biased toward basic and acidic residues. Ser-1539 is subject to Phosphoserine. Composition is skewed to basic and acidic residues over residues 1550–1564 (PEHQAVDIPVKVEVK) and 1575–1591 (VLEEQKPSMELINDKSS). Phosphoserine is present on residues Ser-1590 and Ser-1591. Basic residues predominate over residues 1607-1626 (TKAKKKSRKRNYNSRRRKRK). The span at 1648 to 1658 (RGQNTHPSVDK) shows a compositional bias: polar residues.

In terms of assembly, interacts with SIR4.

Its subcellular location is the nucleus. Involved in the clustering of telomeres at the nuclear periphery, forming discrete subcompartments that accumulate a complex of histone-binding silencing factors like SIR4. Required for SIR4-mediated anchoring and partitioning of plasmids. The polypeptide is Silent chromatin protein ESC1 (ESC1) (Saccharomyces cerevisiae (strain ATCC 204508 / S288c) (Baker's yeast)).